The following is a 335-amino-acid chain: L-carnitine dehydrogenase (335 aa).

29 to 34 (GTGVIG) contributes to the NAD(+) binding site.

This sequence belongs to the 3-hydroxyacyl-CoA dehydrogenase family. L-carnitine dehydrogenase subfamily. As to quaternary structure, homodimer.

Its subcellular location is the cytoplasm. The enzyme catalyses carnitine + NAD(+) = 3-dehydrocarnitine + NADH + H(+). It participates in amine and polyamine metabolism; carnitine metabolism. Its function is as follows. Catalyzes the NAD(+)-dependent oxidation of L-carnitine to 3-dehydrocarnitine. The polypeptide is L-carnitine dehydrogenase (Streptomyces griseus subsp. griseus (strain JCM 4626 / CBS 651.72 / NBRC 13350 / KCC S-0626 / ISP 5235)).